We begin with the raw amino-acid sequence, 87 residues long: Small ribosomal subunit protein bS16 (87 aa).

It belongs to the bacterial ribosomal protein bS16 family.

The protein is Small ribosomal subunit protein bS16 of Aster yellows witches'-broom phytoplasma (strain AYWB).